The primary structure comprises 157 residues: uncharacterized protein (157 aa).

This is an uncharacterized protein from Magallana gigas (Pacific oyster).